We begin with the raw amino-acid sequence, 251 residues long: Pyrroloquinoline-quinone synthase (251 aa).

Belongs to the PqqC family.

The enzyme catalyses 6-(2-amino-2-carboxyethyl)-7,8-dioxo-1,2,3,4,7,8-hexahydroquinoline-2,4-dicarboxylate + 3 O2 = pyrroloquinoline quinone + 2 H2O2 + 2 H2O + H(+). Its pathway is cofactor biosynthesis; pyrroloquinoline quinone biosynthesis. Ring cyclization and eight-electron oxidation of 3a-(2-amino-2-carboxyethyl)-4,5-dioxo-4,5,6,7,8,9-hexahydroquinoline-7,9-dicarboxylic-acid to PQQ. The protein is Pyrroloquinoline-quinone synthase of Pseudomonas putida (strain GB-1).